We begin with the raw amino-acid sequence, 469 residues long: Aspartyl/glutamyl-tRNA(Asn/Gln) amidotransferase subunit B (469 aa).

It belongs to the GatB/GatE family. GatB subfamily. Heterotrimer of A, B and C subunits.

The enzyme catalyses L-glutamyl-tRNA(Gln) + L-glutamine + ATP + H2O = L-glutaminyl-tRNA(Gln) + L-glutamate + ADP + phosphate + H(+). The catalysed reaction is L-aspartyl-tRNA(Asn) + L-glutamine + ATP + H2O = L-asparaginyl-tRNA(Asn) + L-glutamate + ADP + phosphate + 2 H(+). Functionally, allows the formation of correctly charged Asn-tRNA(Asn) or Gln-tRNA(Gln) through the transamidation of misacylated Asp-tRNA(Asn) or Glu-tRNA(Gln) in organisms which lack either or both of asparaginyl-tRNA or glutaminyl-tRNA synthetases. The reaction takes place in the presence of glutamine and ATP through an activated phospho-Asp-tRNA(Asn) or phospho-Glu-tRNA(Gln). The chain is Aspartyl/glutamyl-tRNA(Asn/Gln) amidotransferase subunit B from Thermus thermophilus (strain ATCC BAA-163 / DSM 7039 / HB27).